A 639-amino-acid chain; its full sequence is CTTNBP2 N-terminal-like protein (639 aa).

Residues 87–285 (MKQCKNMQER…DLEASHQHSS (199 aa)) adopt a coiled-coil conformation. Phosphoserine is present on residues S284 and S285. Disordered regions lie at residues 387–430 (VENG…PCSS), 463–490 (RHKF…LSPT), and 511–609 (RFTS…AASL). Composition is skewed to low complexity over residues 407-430 (PSSG…PCSS) and 467-477 (QSQADQDQQAS). Phosphoserine is present on residues S481, S488, S523, S527, S560, S563, and S568. Over residues 511–529 (RFTSQQGPIKPVSPNSSPF) the composition is skewed to polar residues. T570 and T590 each carry phosphothreonine. Low complexity predominate over residues 587-600 (PGLTPSPSATTPLT). S592 carries the post-translational modification Phosphoserine.

As to quaternary structure, interacts with CTTN/cortactin; this interaction may redistribute CTTN to stress fibers. May form homomers. Associates with the core of STRIPAK complexes composed of PP2A catalytic and scaffolding subunits, the striatins (PP2A regulatory subunits), the striatin-associated proteins MOB4, STRIP1 and STRIP2, PDCD10 and members of the STE20 kinases, such as STK24 and STK26.

The protein resides in the cell projection. Its subcellular location is the lamellipodium. It localises to the cytoplasm. The protein localises to the cytoskeleton. It is found in the stress fiber. In terms of biological role, regulates lamellipodial actin dynamics in a CTTN-dependent manner. Associates with core striatin-interacting phosphatase and kinase (STRIPAK) complex to form CTTNBP2NL-STRIPAK complexes. STRIPAK complexes have critical roles in protein (de)phosphorylation and are regulators of multiple signaling pathways including Hippo, MAPK, nuclear receptor and cytoskeleton remodeling. Different types of STRIPAK complexes are involved in a variety of biological processes such as cell growth, differentiation, apoptosis, metabolism and immune regulation. The polypeptide is CTTNBP2 N-terminal-like protein (CTTNBP2NL) (Pongo abelii (Sumatran orangutan)).